We begin with the raw amino-acid sequence, 131 residues long: Sperm microtubule inner protein 11 (131 aa).

Positions 18–44 (KKRNTTEETNQKEPEPTRLPPIISKDG) are disordered. The segment covering 21-33 (NTTEETNQKEPEP) has biased composition (basic and acidic residues).

As to quaternary structure, microtubule inner protein component of sperm flagellar doublet microtubules.

The protein resides in the cytoplasm. Its subcellular location is the cytoskeleton. It localises to the flagellum axoneme. Microtubule inner protein (MIP) part of the dynein-decorated doublet microtubules (DMTs) in flagellum axoneme. May serve to reinforce and thus stabilize the microtubule structure in the sperm flagella. This Homo sapiens (Human) protein is Sperm microtubule inner protein 11.